The sequence spans 701 residues: SH3 domain-binding protein 1 (701 aa).

Basic residues predominate over residues 1–10 (MMKRQLHRMR). Disordered stretches follow at residues 1 to 23 (MMKR…RTPE) and 160 to 182 (SQAT…HSHT). The interaction with CGNL1 stretch occupies residues 1-275 (MMKRQLHRMR…TATHFPRVYG (275 aa)). The BAR domain maps to 17-262 (SLGRTPETAE…RENHGQADHS (246 aa)). Ser-175, Ser-241, Ser-262, and Ser-264 each carry phosphoserine. One can recognise a Rho-GAP domain in the interval 276-469 (VSLATHLQEL…ALIQSADTLF (194 aa)). The tract at residues 470–701 (PGDINFNVSG…RPRSLASETN (232 aa)) is interaction with CD2AP. The interval 496–701 (SEELPSTAVP…RPRSLASETN (206 aa)) is disordered. Residues 508-522 (ATTPAPAPAPAPAPA) are compositionally biased toward pro residues. 2 positions are modified to phosphoserine: Ser-544 and Ser-550. Composition is skewed to pro residues over residues 570–579 (PARPTMPPPQ) and 587–596 (PPAPPLPPGS). Thr-601 bears the Phosphothreonine mark. An SH3-binding motif is present at residues 616 to 625 (APTVPPPLPP). Pro residues-rich tracts occupy residues 618 to 630 (TVPP…PPQP) and 641 to 652 (SPSPASPGPASP). Position 626 is a phosphothreonine (Thr-626). Ser-653 is subject to Phosphoserine. Residues 666–677 (GAATAEGGAPEA) are compositionally biased toward low complexity. The segment covering 682–692 (PTPPAIPPQPR) has biased composition (pro residues).

As to quaternary structure, interacts with RAC1. Interacts with the exocyst via EXOC4 and EXOC8; required for the localization of both SH3BP1 and the exocyst to the leading edge of migrating cells. Interacts with CD2AP and CGNL1; probably part of a complex at cell junctions. Interacts with CAPZA1; recruits CAPZA1 to forming cell junctions. May interact with AFDN. Interacts with PLXND1; they dissociate upon SEMA3E binding to PLXND1 allowing SH3BP1 to transduce downstream signal through RAC1 inactivation. Interacts with ABL1, GRB2 and SRC (via SH3 domain).

The protein localises to the cell projection. It localises to the cell junction. Its subcellular location is the tight junction. It is found in the adherens junction. The protein resides in the phagocytic cup. The protein localises to the nucleus. It localises to the cytoplasm. Its subcellular location is the cytosol. Its function is as follows. GTPase activating protein (GAP) which specifically converts GTP-bound Rho-type GTPases including RAC1 and CDC42 in their inactive GDP-bound form. By specifically inactivating RAC1 at the leading edge of migrating cells, it regulates the spatiotemporal organization of cell protrusions which is important for proper cell migration. Also negatively regulates CDC42 in the process of actin remodeling and the formation of epithelial cell junctions. Through its GAP activity toward RAC1 and/or CDC42 plays a specific role in phagocytosis of large particles. Specifically recruited by a PI3 kinase/PI3K-dependent mechanism to sites of large particles engagement, inactivates RAC1 and/or CDC42 allowing the reorganization of the underlying actin cytoskeleton required for engulfment. It also plays a role in angiogenesis and the process of repulsive guidance as part of a semaphorin-plexin signaling pathway. Following the binding of PLXND1 to extracellular SEMA3E it dissociates from PLXND1 and inactivates RAC1, inducing the intracellular reorganization of the actin cytoskeleton and the collapse of cells. The chain is SH3 domain-binding protein 1 from Homo sapiens (Human).